Reading from the N-terminus, the 437-residue chain is Enolase (437 aa).

Residue Gln162 participates in (2R)-2-phosphoglycerate binding. Glu204 acts as the Proton donor in catalysis. Mg(2+) contacts are provided by Asp251, Glu297, and Asp324. (2R)-2-phosphoglycerate is bound by residues Lys349, Arg378, Ser379, and Lys400. Catalysis depends on Lys349, which acts as the Proton acceptor.

It belongs to the enolase family. Requires Mg(2+) as cofactor.

The protein localises to the cytoplasm. It localises to the secreted. It is found in the cell surface. The catalysed reaction is (2R)-2-phosphoglycerate = phosphoenolpyruvate + H2O. It participates in carbohydrate degradation; glycolysis; pyruvate from D-glyceraldehyde 3-phosphate: step 4/5. Functionally, catalyzes the reversible conversion of 2-phosphoglycerate (2-PG) into phosphoenolpyruvate (PEP). It is essential for the degradation of carbohydrates via glycolysis. In Chlorobium phaeovibrioides (strain DSM 265 / 1930) (Prosthecochloris vibrioformis (strain DSM 265)), this protein is Enolase.